The primary structure comprises 325 residues: NADH-quinone oxidoreductase subunit H (325 aa).

8 helical membrane passes run 11–31 (ILLTILKAVVILLVVVTCGAF), 81–101 (VIFTLAPMIAFTSLLLAFAIV), 114–134 (IGILFFLMMAGLAVYAVLFAG), 154–174 (LSYEVFLGLSLMGVVAQAGSF), 186–206 (VWNVIPQFFGFITFAIAGVAV), 237–257 (FFVGEYIGIVTISALMVTLFF), 265–285 (LPPFIWFALKTAFFMMMFILI), and 304–324 (ICLPLTLINLLVTAAVILWQA).

Belongs to the complex I subunit 1 family. In terms of assembly, NDH-1 is composed of 13 different subunits. Subunits NuoA, H, J, K, L, M, N constitute the membrane sector of the complex.

It is found in the cell inner membrane. The catalysed reaction is a quinone + NADH + 5 H(+)(in) = a quinol + NAD(+) + 4 H(+)(out). Functionally, NDH-1 shuttles electrons from NADH, via FMN and iron-sulfur (Fe-S) centers, to quinones in the respiratory chain. The immediate electron acceptor for the enzyme in this species is believed to be ubiquinone. Couples the redox reaction to proton translocation (for every two electrons transferred, four hydrogen ions are translocated across the cytoplasmic membrane), and thus conserves the redox energy in a proton gradient. This subunit may bind ubiquinone. The polypeptide is NADH-quinone oxidoreductase subunit H (Escherichia coli O139:H28 (strain E24377A / ETEC)).